A 197-amino-acid polypeptide reads, in one-letter code: Probable GTP-binding protein EngB (197 aa).

The EngB-type G domain maps to 22-197 (TGVEVAFAGR…FKEKLDTWYQ (176 aa)). GTP contacts are provided by residues 30 to 37 (GRSNAGKS), 57 to 61 (GRTQL), 75 to 78 (DLPG), 142 to 145 (TKAD), and 177 to 179 (FSS). Residues Ser37 and Thr59 each contribute to the Mg(2+) site.

This sequence belongs to the TRAFAC class TrmE-Era-EngA-EngB-Septin-like GTPase superfamily. EngB GTPase family. Requires Mg(2+) as cofactor.

Its function is as follows. Necessary for normal cell division and for the maintenance of normal septation. In Francisella tularensis subsp. tularensis (strain FSC 198), this protein is Probable GTP-binding protein EngB.